The primary structure comprises 391 residues: Ferrochelatase (391 aa).

Fe cation is bound by residues His196 and Glu281.

Belongs to the ferrochelatase family.

The protein resides in the cytoplasm. The catalysed reaction is heme b + 2 H(+) = protoporphyrin IX + Fe(2+). It participates in porphyrin-containing compound metabolism; protoheme biosynthesis; protoheme from protoporphyrin-IX: step 1/1. In terms of biological role, catalyzes the ferrous insertion into protoporphyrin IX. The protein is Ferrochelatase of Synechococcus sp. (strain CC9605).